Consider the following 78-residue polypeptide: Large ribosomal subunit protein bL31 (78 aa).

It belongs to the bacterial ribosomal protein bL31 family. Type A subfamily. As to quaternary structure, part of the 50S ribosomal subunit.

In terms of biological role, binds the 23S rRNA. This chain is Large ribosomal subunit protein bL31 (rpmE), found in Rickettsia conorii (strain ATCC VR-613 / Malish 7).